The primary structure comprises 581 residues: Dehydrocurvularin exporter (581 aa).

The segment covering 1–10 (MTDSPSLESN) has biased composition (polar residues). The interval 1 to 47 (MTDSPSLESNNKSDMDTPRPPASSHDEHDAAESVSEKQDSATTSPTG) is disordered. A glycan (N-linked (GlcNAc...) asparagine) is linked at Asn-11. Residues 24–39 (SHDEHDAAESVSEKQD) show a composition bias toward basic and acidic residues. Transmembrane regions (helical) follow at residues 61 to 81 (LVMF…GIIA), 96 to 116 (DVGW…PLWG), 126 to 146 (WVYL…AAAP), 159 to 179 (GWGA…VAPP), 184 to 204 (LLIG…PVIG), 215 to 235 (WCFW…LLFL), 251 to 271 (IILN…VCLT), 288 to 308 (VIAT…VEWL), 330 to 350 (IFCL…PIYF), 363 to 383 (VNTL…GGAI), 392 to 412 (YELA…ILDV), 424 to 444 (VLFG…VQGF), 456 to 476 (IMVM…QSLF), and 527 to 547 (VFAF…LIPF). The segment at 552-581 (DHEKKPSKDAMASDEVKASEEVQQEKKVTV) is disordered. Positions 565–581 (DEVKASEEVQQEKKVTV) are enriched in basic and acidic residues.

It belongs to the major facilitator superfamily. TCR/Tet family.

The protein localises to the cell membrane. Functionally, efflux pump that is probably involved in the export of dehydrocurvularin. This Alternaria cinerariae protein is Dehydrocurvularin exporter.